The primary structure comprises 97 residues: YcgL domain-containing protein PSPTO_3921 (97 aa).

The YcgL domain occupies 3–87 (RICSIYRSPK…AEDEYIEHLP (85 aa)).

The protein is YcgL domain-containing protein PSPTO_3921 of Pseudomonas syringae pv. tomato (strain ATCC BAA-871 / DC3000).